The chain runs to 109 residues: Hainantoxin-XVIII-3 (109 aa).

Residues 1-18 (MKLSIIIIATSLVIAVVA) form the signal peptide. Residues 19-46 (FPSKDSKAIENDKTEQRMEIVVQETARA) constitute a propeptide that is removed on maturation. Cystine bridges form between Cys-47-Cys-62, Cys-55-Cys-68, Cys-59-Cys-108, and Cys-61-Cys-81.

Belongs to the neurotoxin 25 family. F7 subfamily. In terms of tissue distribution, expressed by the venom gland.

Its subcellular location is the secreted. Putative ion channel inhibitor. In Cyriopagopus hainanus (Chinese bird spider), this protein is Hainantoxin-XVIII-3.